A 396-amino-acid chain; its full sequence is Stearoyl-[acyl-carrier-protein] 9-desaturase 5, chloroplastic (396 aa).

Residues 1–29 constitute a chloroplast transit peptide; the sequence is MAMAMDRIVFSPSSYVYRPCQARGSRSSR. Fe cation contacts are provided by glutamate 137, glutamate 175, histidine 178, glutamate 228, glutamate 261, and histidine 264.

The protein belongs to the fatty acid desaturase type 2 family. In terms of assembly, homodimer. Fe(2+) serves as cofactor. Ubiquitously expressed with a preference in leaves, flowers and stems.

It is found in the plastid. It localises to the chloroplast stroma. It carries out the reaction octadecanoyl-[ACP] + 2 reduced [2Fe-2S]-[ferredoxin] + O2 + 2 H(+) = (9Z)-octadecenoyl-[ACP] + 2 oxidized [2Fe-2S]-[ferredoxin] + 2 H2O. Its pathway is lipid metabolism; fatty acid metabolism. Its function is as follows. Converts stearoyl-ACP to oleoyl-ACP by introduction of a cis double bond between carbons 9 and 10 of the acyl chain. The protein is Stearoyl-[acyl-carrier-protein] 9-desaturase 5, chloroplastic (S-ACP-DES5) of Arabidopsis thaliana (Mouse-ear cress).